Here is a 516-residue protein sequence, read N- to C-terminus: RxLR effector protein PITG_15127 (516 aa).

Residues 1-22 (MRLYSGAILCTIATLLISVSTA) form the signal peptide. The short motif at 48–63 (RFLRVSTQNTENGENR) is the RxLR-dEER element.

It belongs to the RxLR effector family.

Its subcellular location is the secreted. The protein localises to the host cell membrane. It localises to the host nucleus. The protein resides in the host cytoplasm. Functionally, effector that enhances P.infestans colonization of Nicotiana benthamiana leaves. In Phytophthora infestans (strain T30-4) (Potato late blight agent), this protein is RxLR effector protein PITG_15127.